Consider the following 83-residue polypeptide: Mu-theraphotoxin-Hhn2g (83 aa).

A signal peptide spans 1–21 (MKASMYLALAGLVLLFVVGYA). Positions 22–48 (SESEEKEFPRELLSKIFAVDDFKGEER) are excised as a propeptide. Intrachain disulfides connect Cys50–Cys65 and Cys57–Cys70. Leu81 bears the Leucine amide mark.

The protein belongs to the neurotoxin 10 (Hwtx-1) family. 15 (Hntx-3) subfamily. Monomer. Expressed by the venom gland.

The protein resides in the secreted. Its function is as follows. Lethal neurotoxin. Selectively blocks tetrodotoxin-sensitive voltage-gated sodium channels (Nav). Does not affect tetrodotoxin-resistant voltage-gated sodium channels or calcium channels. In Cyriopagopus hainanus (Chinese bird spider), this protein is Mu-theraphotoxin-Hhn2g.